The primary structure comprises 663 residues: Translation factor guf1, mitochondrial (663 aa).

Residues 1-51 (MRGCLQVLRWLSTSTARRPVSSRPLHEIFPKSEFRRPFTSTILRQAQASRN) constitute a mitochondrion transit peptide. The tr-type G domain maps to 65–245 (ERFRNFCIVA…TVIERIPAPV (181 aa)). Residues 74–81 (AHVDHGKS), 138–142 (DTPGH), and 192–195 (NKVD) each bind GTP.

The protein belongs to the TRAFAC class translation factor GTPase superfamily. Classic translation factor GTPase family. LepA subfamily.

It is found in the mitochondrion inner membrane. The enzyme catalyses GTP + H2O = GDP + phosphate + H(+). In terms of biological role, promotes mitochondrial protein synthesis. May act as a fidelity factor of the translation reaction, by catalyzing a one-codon backward translocation of tRNAs on improperly translocated ribosomes. Binds to mitochondrial ribosomes in a GTP-dependent manner. The sequence is that of Translation factor guf1, mitochondrial (guf1) from Talaromyces marneffei (strain ATCC 18224 / CBS 334.59 / QM 7333) (Penicillium marneffei).